Reading from the N-terminus, the 465-residue chain is Cysteine--tRNA ligase (465 aa).

Residue C30 coordinates Zn(2+). Residues 32–42 (ITVYDYCHIGH) carry the 'HIGH' region motif. Positions 214, 239, and 243 each coordinate Zn(2+). Positions 271–275 (KMSKS) match the 'KMSKS' region motif. K274 lines the ATP pocket.

Belongs to the class-I aminoacyl-tRNA synthetase family. In terms of assembly, monomer. Zn(2+) serves as cofactor.

Its subcellular location is the cytoplasm. It carries out the reaction tRNA(Cys) + L-cysteine + ATP = L-cysteinyl-tRNA(Cys) + AMP + diphosphate. This is Cysteine--tRNA ligase from Burkholderia thailandensis (strain ATCC 700388 / DSM 13276 / CCUG 48851 / CIP 106301 / E264).